We begin with the raw amino-acid sequence, 424 residues long: Putative polyketide beta-ketoacyl synthase 2 (424 aa).

The region spanning 13–416 is the Ketosynthase family 3 (KS3) domain; it reads SRRAVVTGLG…GSNSALVLRR (404 aa).

It belongs to the thiolase-like superfamily. Beta-ketoacyl-ACP synthases family.

Its function is as follows. Involved in developmentally regulated synthesis of a compound biosynthetically related to polyketide antibiotics which is essential for spore color in Streptomyces coelicolor. In Streptomyces coelicolor (strain ATCC BAA-471 / A3(2) / M145), this protein is Putative polyketide beta-ketoacyl synthase 2.